Reading from the N-terminus, the 394-residue chain is Elongation factor Tu (394 aa).

One can recognise a tr-type G domain in the interval 10–205 (KPHMNVGTIG…TMDNYFDLPE (196 aa)). Positions 19-26 (GHVDHGKT) are G1. Residue 19 to 26 (GHVDHGKT) participates in GTP binding. A Mg(2+)-binding site is contributed by threonine 26. Residues 61 to 65 (GITIN) form a G2 region. Positions 82 to 85 (DCPG) are G3. GTP is bound by residues 82–86 (DCPGH) and 137–140 (NKLD). Residues 137-140 (NKLD) are G4. A G5 region spans residues 173-175 (SAF).

Belongs to the TRAFAC class translation factor GTPase superfamily. Classic translation factor GTPase family. EF-Tu/EF-1A subfamily. As to quaternary structure, monomer.

It localises to the cytoplasm. The enzyme catalyses GTP + H2O = GDP + phosphate + H(+). Functionally, GTP hydrolase that promotes the GTP-dependent binding of aminoacyl-tRNA to the A-site of ribosomes during protein biosynthesis. The protein is Elongation factor Tu of Borrelia duttonii (strain Ly).